The chain runs to 247 residues: Adenosylcobinamide-GDP ribazoletransferase (247 aa).

5 consecutive transmembrane segments (helical) span residues 34-54 (IITF…VFMV), 59-79 (CGVP…TGGF), 113-133 (GGLA…ELAL), 138-158 (ILAS…LLMY), and 194-214 (VLLP…AIFI).

It belongs to the CobS family. The cofactor is Mg(2+).

The protein localises to the cell inner membrane. The catalysed reaction is alpha-ribazole + adenosylcob(III)inamide-GDP = adenosylcob(III)alamin + GMP + H(+). It carries out the reaction alpha-ribazole 5'-phosphate + adenosylcob(III)inamide-GDP = adenosylcob(III)alamin 5'-phosphate + GMP + H(+). It participates in cofactor biosynthesis; adenosylcobalamin biosynthesis; adenosylcobalamin from cob(II)yrinate a,c-diamide: step 7/7. Its function is as follows. Joins adenosylcobinamide-GDP and alpha-ribazole to generate adenosylcobalamin (Ado-cobalamin). Also synthesizes adenosylcobalamin 5'-phosphate from adenosylcobinamide-GDP and alpha-ribazole 5'-phosphate. This Escherichia coli O7:K1 (strain IAI39 / ExPEC) protein is Adenosylcobinamide-GDP ribazoletransferase.